Consider the following 393-residue polypeptide: Phosphoglycerate kinase (393 aa).

Substrate is bound by residues 21–23, Arg-36, 59–62, Arg-118, and Arg-151; these read DFN and HLGR. ATP is bound by residues Lys-201, Glu-323, and 349–352; that span reads GGDS.

It belongs to the phosphoglycerate kinase family. As to quaternary structure, monomer.

It is found in the cytoplasm. It catalyses the reaction (2R)-3-phosphoglycerate + ATP = (2R)-3-phospho-glyceroyl phosphate + ADP. Its pathway is carbohydrate degradation; glycolysis; pyruvate from D-glyceraldehyde 3-phosphate: step 2/5. The chain is Phosphoglycerate kinase from Moorella thermoacetica (strain ATCC 39073 / JCM 9320).